Reading from the N-terminus, the 217-residue chain is Somatotropin (217 aa).

The first 26 residues, 1-26 (MMAAGPRTSLLLAFALLCLPWTQVVG), serve as a signal peptide directing secretion. His-46 lines the Zn(2+) pocket. Residues Cys-79 and Cys-190 are joined by a disulfide bond. Ser-132 is modified (phosphoserine). Glu-199 serves as a coordination point for Zn(2+). Cys-207 and Cys-215 are joined by a disulfide.

It belongs to the somatotropin/prolactin family.

It localises to the secreted. Its function is as follows. Plays an important role in growth control. Its major role in stimulating body growth is to stimulate the liver and other tissues to secrete IGF1. It stimulates both the differentiation and proliferation of myoblasts. It also stimulates amino acid uptake and protein synthesis in muscle and other tissues. In Bubalus bubalis (Domestic water buffalo), this protein is Somatotropin (GH1).